Consider the following 318-residue polypeptide: Petal death protein (318 aa).

Positions 1–3 (MAP) are cleaved as a propeptide — removed in mature form. The segment at 1–24 (MAPPNGTTNGETEVATQGSYTAVS) is disordered. Mg(2+)-binding residues include D107, D109, and K142.

It belongs to the isocitrate lyase/PEP mutase superfamily. Homodimer and homotetramer formed by a dimer of homodimer. The cofactor is Mg(2+). Mn(2+) serves as cofactor. Requires Fe(2+) as cofactor. Co(2+) is required as a cofactor. In terms of tissue distribution, accumulates in senescing flower petals.

The enzyme catalyses oxaloacetate + H2O = oxalate + acetate + H(+). Functionally, catalyzes cleavage of the C(2)-C(3) bond in oxaloacetate and in (2R)-alkyl malate derivatives to form oxalate and acetate, and alkyl carboxylates and R-ketocarboxylates, respectively. This chain is Petal death protein, found in Dianthus caryophyllus (Carnation).